A 565-amino-acid chain; its full sequence is Glucose starvation modulator protein 1 (565 aa).

Positions 20–48 (CVFCHQKHLQCSNERPCKNCVKRNIAHGC) form a DNA-binding region, zn(2)-C6 fungal-type. 2 disordered regions span residues 63-106 (GVSG…ESSN) and 250-269 (QVSPSPSNTSTSENNTNTLS). Residues 82–93 (SPLSTSMSPTDS) are compositionally biased toward polar residues. Over residues 252–269 (SPSPSNTSTSENNTNTLS) the composition is skewed to low complexity.

Belongs to the ERT1/acuK family.

It localises to the nucleus. Its function is as follows. Transcription factor which regulates nonfermentable carbon utilization. The protein is Glucose starvation modulator protein 1 (GSM1) of Candida dubliniensis (strain CD36 / ATCC MYA-646 / CBS 7987 / NCPF 3949 / NRRL Y-17841) (Yeast).